A 400-amino-acid chain; its full sequence is Cytochrome P450 BJ-1 homolog (400 aa).

C349 contributes to the heme binding site.

This sequence belongs to the cytochrome P450 family. The cofactor is heme.

Cytochromes P450 are a group of heme-thiolate monooxygenases. They oxidize a variety of structurally unrelated compounds, including steroids, fatty acids, and xenobiotics. The protein is Cytochrome P450 BJ-1 homolog (cyp112A2) of Sinorhizobium fredii (strain NBRC 101917 / NGR234).